A 490-amino-acid polypeptide reads, in one-letter code: GTPase Der (490 aa).

In terms of domain architecture, EngA-type G 1 spans 3-166 (PVIALVGRPN…IALSEFPKDD (164 aa)). GTP-binding positions include 9–16 (GRPNVGKS), 56–60 (DTGGI), and 118–121 (NKVD). A disordered region spans residues 164-191 (KDDADEPEEGEEEIVAEGEEAKRIPGPS). Residues 166–181 (DADEPEEGEEEIVAEG) show a composition bias toward acidic residues. The segment covering 182–191 (EEAKRIPGPS) has biased composition (basic and acidic residues). The EngA-type G 2 domain occupies 196–369 (IKIAIIGRPN…SVQNSFKSAV (174 aa)). Residues 202–209 (GRPNVGKS), 249–253 (DTAGV), and 314–317 (NKWD) each bind GTP. The KH-like domain maps to 370–454 (TRWPTSRLTQ…PIRIEFKGGE (85 aa)). A disordered region spans residues 452–490 (GGENPYEGNKNTLTDRQVNKKRRLMSHHKKADKKRRDKR). A compositionally biased stretch (basic residues) spans 470 to 490 (NKKRRLMSHHKKADKKRRDKR).

This sequence belongs to the TRAFAC class TrmE-Era-EngA-EngB-Septin-like GTPase superfamily. EngA (Der) GTPase family. Associates with the 50S ribosomal subunit.

In terms of biological role, GTPase that plays an essential role in the late steps of ribosome biogenesis. The chain is GTPase Der from Pseudomonas fluorescens (strain ATCC BAA-477 / NRRL B-23932 / Pf-5).